The sequence spans 257 residues: uncharacterized protein (257 aa).

An N-terminal signal peptide occupies residues 1 to 22 (MIHSKRLKMCLCLIILSVFIGA). C23 is lipidated: N-palmitoyl cysteine. C23 carries the S-diacylglycerol cysteine lipid modification.

The protein belongs to the staphylococcal tandem lipoprotein family.

The protein localises to the cell membrane. This is an uncharacterized protein from Staphylococcus aureus (strain MRSA252).